We begin with the raw amino-acid sequence, 292 residues long: Fat storage-inducing transmembrane protein 1 (292 aa).

The Lumenal portion of the chain corresponds to 1–18; that stretch reads MERGPTVGAGLGAGTRVR. A helical membrane pass occupies residues 19–39; that stretch reads ALLGCLVKVLLWVASALLYFG. Residues 40 to 54 lie on the Cytoplasmic side of the membrane; sequence SEQAARLLGSPCLRR. Residues 55–75 form a helical membrane-spanning segment; the sequence is LYHAWLAAVVIFGPLLQFHVN. Residues 76-94 lie on the Lumenal side of the membrane; the sequence is SRTIFASHGNFFNIKFVNS. Residues 95–115 form a helical membrane-spanning segment; the sequence is AWGWTCTFLGGFVLLVVFLAT. The Cytoplasmic portion of the chain corresponds to 116-141; sequence RRVAVTARHLSRLVVGAAVWRGAGRA. A helical transmembrane segment spans residues 142-162; the sequence is FLLIEDLTGSCFEPLPQGLLL. Topologically, residues 163–187 are lumenal; sequence HELPDRKSCLAAGHQWRGYTVSSHT. Histidine 186 is a catalytic residue. Residues 188–208 form a helical membrane-spanning segment; the sequence is FLLTFCCLLMAEEAAVFAKYL. The Cytoplasmic segment spans residues 209–220; sequence AHGLPAGAPLRL. The chain crosses the membrane as a helical span at residues 221-241; the sequence is VFLLNVLLLGLWNFLLLCTVI. Residues 242–249 lie on the Lumenal side of the membrane; sequence YFHQYTHK. Histidine 244 is an active-site residue. A helical membrane pass occupies residues 250-270; it reads VVGAAVGTFAWYLTYGSWYHQ. Over 271-292 the chain is Cytoplasmic; that stretch reads PWSPGIPGHGLFPRSRSMRKHN.

Belongs to the FIT family. FIT1 subfamily. As to expression, predominantly expressed in skeletal muscle and at lower levels in the heart (at protein level). In the heart, mRNA expression levels do not correlate well with protein levels, suggesting post-transcriptional regulation in this organ.

It localises to the endoplasmic reticulum membrane. In terms of biological role, plays an important role in the formation of lipid droplets (LDs) which are storage organelles at the center of lipid and energy homeostasis. Directly binds to diacylglycerol (DAGs) and triacylglycerol. The protein is Fat storage-inducing transmembrane protein 1 of Mus musculus (Mouse).